The following is a 434-amino-acid chain: Trehalose-phosphatase (434 aa).

2 residues coordinate Mg(2+): D156 and D158. D158 functions as the Proton donor/acceptor in the catalytic mechanism. 275–277 provides a ligand contact to substrate; the sequence is QKK. Mg(2+) is bound at residue D366.

The protein belongs to the gob-1 trehalose phosphatase family. Requires Mg(2+) as cofactor.

The catalysed reaction is alpha,alpha-trehalose 6-phosphate + H2O = alpha,alpha-trehalose + phosphate. In terms of biological role, catalyzes the hydrolysis of trehalose 6-phosphate to trehalose and phosphate; prevents the accumulation of toxic levels of trehalose 6-phosphate. In Caenorhabditis briggsae, this protein is Trehalose-phosphatase (gob-1).